The chain runs to 122 residues: Protein MGF 110-6L (122 aa).

The signal sequence occupies residues Met1–Gly18. N-linked (GlcNAc...) asparagine; by host glycosylation is present at Asn100. Residues Lys119–Leu122 carry the Prevents secretion from ER motif.

Belongs to the asfivirus MGF 110 family. Post-translationally, N-glycosylated.

Its subcellular location is the host endoplasmic reticulum lumen. Its function is as follows. Plays a role in virus cell tropism, and may be required for efficient virus replication in macrophages. The chain is Protein MGF 110-6L from Ornithodoros (relapsing fever ticks).